Consider the following 146-residue polypeptide: Hemoglobin subunit beta (146 aa).

At Val-1 the chain carries N-acetylvaline. One can recognise a Globin domain in the interval His-2–His-146. Thr-12 is subject to Phosphothreonine. Ser-44 is subject to Phosphoserine. An N6-acetyllysine modification is found at Lys-59. His-63 contacts heme b. The residue at position 82 (Lys-82) is an N6-acetyllysine. A heme b-binding site is contributed by His-92. Cys-93 is subject to S-nitrosocysteine. The residue at position 144 (Lys-144) is an N6-acetyllysine.

Belongs to the globin family. Heterotetramer of two alpha chains and two beta chains. As to expression, red blood cells.

Involved in oxygen transport from the lung to the various peripheral tissues. This is Hemoglobin subunit beta (HBB) from Mustela lutreola (European mink).